The chain runs to 182 residues: Adenine phosphoribosyltransferase (182 aa).

It belongs to the purine/pyrimidine phosphoribosyltransferase family. In terms of assembly, homodimer.

The protein localises to the cytoplasm. It carries out the reaction AMP + diphosphate = 5-phospho-alpha-D-ribose 1-diphosphate + adenine. It participates in purine metabolism; AMP biosynthesis via salvage pathway; AMP from adenine: step 1/1. Catalyzes a salvage reaction resulting in the formation of AMP, that is energically less costly than de novo synthesis. The protein is Adenine phosphoribosyltransferase of Saccharopolyspora erythraea (strain ATCC 11635 / DSM 40517 / JCM 4748 / NBRC 13426 / NCIMB 8594 / NRRL 2338).